The primary structure comprises 817 residues: TPR repeat-containing protein C19B12.01 (817 aa).

Disordered stretches follow at residues 276–298 and 386–413; these read DQKS…PNHP and GKSP…DGEN. TPR repeat units lie at residues 459–492, 521–554, 555–588, and 625–658; these read LQMW…DPYD, APAQ…NPLS, YPTW…NPED, and WRIW…KGKD.

This Schizosaccharomyces pombe (strain 972 / ATCC 24843) (Fission yeast) protein is TPR repeat-containing protein C19B12.01.